The primary structure comprises 454 residues: L-cysteine desulfhydrase (454 aa).

The segment at 1–25 is disordered; sequence MEAGERRNGDSMSHNHRAPKKPRLA. Residues 14-23 are compositionally biased toward basic residues; sequence HNHRAPKKPR. Lys-257 carries the post-translational modification N6-(pyridoxal phosphate)lysine.

Belongs to the class-V pyridoxal-phosphate-dependent aminotransferase family. The cofactor is pyridoxal 5'-phosphate. In terms of tissue distribution, highly expressed in stems and cauline leaves, and at lower levels in roots, rosette leaves and flowers.

It carries out the reaction L-cysteine + H2O = hydrogen sulfide + pyruvate + NH4(+) + H(+). Its function is as follows. Catalyzes the production of hydrogen sulfide (H2S) from cysteine. Is mainly responsible for the degradation of cysteine to generate H2S, a regulator of stomatal movement and closure. The sequence is that of L-cysteine desulfhydrase (LCD) from Arabidopsis thaliana (Mouse-ear cress).